Consider the following 352-residue polypeptide: Protein MGF 360-9L (352 aa).

It belongs to the asfivirus MGF 360 family. Interacts with host STAT1; this interaction mediates STAT1 degradation through apoptosis. Interacts with host STAT2; this interaction mediates STAT2 degradation through the proteasome.

It localises to the host cytoplasm. Plays a role in virus cell tropism, and may be required for efficient virus replication in macrophages. The sequence is that of Protein MGF 360-9L from Ornithodoros (relapsing fever ticks).